Here is a 424-residue protein sequence, read N- to C-terminus: Glutathione reductase (424 aa).

Lys8 provides a ligand contact to FAD. A glutathione-binding site is contributed by Tyr56. Ala72 lines the FAD pocket. NADP(+) contacts are provided by Ala137, Ile140, Glu143, Arg160, Arg166, and Gly236. Asp277 contributes to the FAD binding site. Leu283 contributes to the NADP(+) binding site. Thr285 is a binding site for FAD. Glutathione is bound at residue Arg293. An NADP(+)-binding site is contributed by Val316. His413 is a binding site for FAD. Catalysis depends on His413, which acts as the Proton acceptor.

The protein belongs to the class-I pyridine nucleotide-disulfide oxidoreductase family. As to quaternary structure, homodimer; disulfide-linked. FAD is required as a cofactor.

Its subcellular location is the mitochondrion. It localises to the cytoplasm. The catalysed reaction is 2 glutathione + NADP(+) = glutathione disulfide + NADPH + H(+). Its function is as follows. Catalyzes the reduction of glutathione disulfide (GSSG) to reduced glutathione (GSH). Constitutes the major mechanism to maintain a high GSH:GSSG ratio in the cytosol. The sequence is that of Glutathione reductase (Gsr) from Rattus norvegicus (Rat).